The following is a 1194-amino-acid chain: UPF0507 protein PICST_55861 (1194 aa).

Residues 324-475 (QSYDPEAVKF…LSSSLSDELS (152 aa)) form the VPS9 domain.

This sequence belongs to the UPF0507 family.

In Scheffersomyces stipitis (strain ATCC 58785 / CBS 6054 / NBRC 10063 / NRRL Y-11545) (Yeast), this protein is UPF0507 protein PICST_55861.